Here is an 85-residue protein sequence, read N- to C-terminus: Beta-insect depressant toxin BmKITa (85 aa).

The first 21 residues, 1–21 (MKLFLLLLISASMLIDGLVNA), serve as a signal peptide directing secretion. One can recognise an LCN-type CS-alpha/beta domain in the interval 22 to 82 (DGYIRGSNGC…TWKSESNTCG (61 aa)). 4 cysteine pairs are disulfide-bonded: C31/C81, C35/C56, C42/C63, and C46/C65. The residue at position 82 (G82) is a Glycine amide.

As to expression, expressed by the venom gland.

Its subcellular location is the secreted. Depressant insect beta-toxins cause a transient contraction paralysis followed by a slow flaccid paralysis. They bind voltage-independently at site-4 of sodium channels (Nav) and shift the voltage of activation toward more negative potentials thereby affecting sodium channel activation and promoting spontaneous and repetitive firing. This toxin also displays an evident analgesic effect but is devoid of any toxicity on mice. The chain is Beta-insect depressant toxin BmKITa from Olivierus martensii (Manchurian scorpion).